A 123-amino-acid polypeptide reads, in one-letter code: Large ribosomal subunit protein bL20 (123 aa).

Belongs to the bacterial ribosomal protein bL20 family.

In terms of biological role, binds directly to 23S ribosomal RNA and is necessary for the in vitro assembly process of the 50S ribosomal subunit. It is not involved in the protein synthesizing functions of that subunit. This chain is Large ribosomal subunit protein bL20 (rplT), found in Chlamydia muridarum (strain MoPn / Nigg).